The following is a 142-amino-acid chain: Deoxyuridine 5'-triphosphate nucleotidohydrolase (142 aa).

It belongs to the dUTPase family. Mg(2+) is required as a cofactor.

The catalysed reaction is dUTP + H2O = dUMP + diphosphate + H(+). Functionally, this enzyme is involved in nucleotide metabolism: it produces dUMP, the immediate precursor of thymidine nucleotides and it decreases the intracellular concentration of dUTP so that uracil cannot be incorporated into DNA. This chain is Deoxyuridine 5'-triphosphate nucleotidohydrolase (DUT), found in Swinepox virus (strain Kasza) (SWPV).